A 276-amino-acid polypeptide reads, in one-letter code: MNETQSNEQILKLFIVSDSIGETAQRMIHATLTQFPDLHNVEIKKFPYIKDEEEFLNILNLAREQHAIVATTLVSESFNALGHQFAHEHDIPYVDYMSDLISIIEKVTHSQPLMESGALRKLNDEYFKRIEAIEYSVKYDDGKHFTDIGEADALIVGVSRTSKTPLSMYLANKGYKIANIPLVPEIEIPDNVYKQKGLKVFGLTASPQYIANIRKNRAETLGLSSESRYNNLDRIKKELVYAEEVFKKLNATVINTEYKSIEESAFYIEKFLQPKL.

Gly157 to Thr164 contributes to the ADP binding site.

This sequence belongs to the pyruvate, phosphate/water dikinase regulatory protein family. PDRP subfamily.

The enzyme catalyses N(tele)-phospho-L-histidyl/L-threonyl-[pyruvate, phosphate dikinase] + ADP = N(tele)-phospho-L-histidyl/O-phospho-L-threonyl-[pyruvate, phosphate dikinase] + AMP + H(+). The catalysed reaction is N(tele)-phospho-L-histidyl/O-phospho-L-threonyl-[pyruvate, phosphate dikinase] + phosphate + H(+) = N(tele)-phospho-L-histidyl/L-threonyl-[pyruvate, phosphate dikinase] + diphosphate. Its function is as follows. Bifunctional serine/threonine kinase and phosphorylase involved in the regulation of the pyruvate, phosphate dikinase (PPDK) by catalyzing its phosphorylation/dephosphorylation. The polypeptide is Putative pyruvate, phosphate dikinase regulatory protein 1 (Staphylococcus haemolyticus (strain JCSC1435)).